The primary structure comprises 355 residues: Guanine nucleotide-binding protein G(i) subunit alpha-2 (355 aa).

Residue G2 is the site of N-myristoyl glycine attachment. C3 carries S-palmitoyl cysteine lipidation. Positions 32-355 (REVKLLLLGA…KNNLKDCGLF (324 aa)) constitute a G-alpha domain. The tract at residues 35–48 (KLLLLGAGESGKST) is G1 motif. Residues 40–47 (GAGESGKS), 176–182 (LRTRVKT), 201–205 (DVGGQ), 270–273 (NKKD), and A327 each bind GTP. Residues S47 and T182 each contribute to the Mg(2+) site. A G2 motif region spans residues 174-182 (DVLRTRVKT). The G3 motif stretch occupies residues 197–206 (FKMFDVGGQR). The segment at 266 to 273 (ILFLNKKD) is G4 motif. The G5 motif stretch occupies residues 325 to 330 (TCATDT).

It belongs to the G-alpha family. G(i/o/t/z) subfamily. As to quaternary structure, g proteins are composed of 3 units; alpha, beta and gamma. The alpha chain contains the guanine nucleotide binding site. In this context, interacts with GNB2. Interacts with UNC5B. Interacts with GPSM1. Interacts with RGS12 and RGS14. Interacts (inactive GDP-bound form) with NUCB1 (via GBA motif); the interaction leads to activation of GNAI3. Interacts (inactive GDP-bound form) with CCDC88C/DAPLE (via GBA motif). Interacts (inactive GDP-bound form) with CCDC8A/GIV (via GBA motif). As to expression, ubiquitously expressed. Most abundant in the lung and in the spleen.

It is found in the cytoplasm. The protein localises to the cytoskeleton. It localises to the microtubule organizing center. The protein resides in the centrosome. Its subcellular location is the cell membrane. It is found in the membrane. Functionally, guanine nucleotide-binding proteins (G proteins) are involved as modulators or transducers in various transmembrane signaling systems. The G(i) proteins are involved in hormonal regulation of adenylate cyclase: they inhibit the cyclase in response to beta-adrenergic stimuli. May play a role in cell division. This Cavia porcellus (Guinea pig) protein is Guanine nucleotide-binding protein G(i) subunit alpha-2 (GNAI2).